Here is a 553-residue protein sequence, read N- to C-terminus: Rhodopsin kinase GRK7 (553 aa).

Serine 36 carries the phosphoserine; by PKA modification. Positions phenylalanine 56–leucine 176 constitute an RGS domain. One can recognise a Protein kinase domain in the interval phenylalanine 191–phenylalanine 454. ATP is bound by residues leucine 197–valine 205 and lysine 220. Residue aspartate 316 is the Proton acceptor of the active site. The 66-residue stretch at lysine 455–glutamate 520 folds into the AGC-kinase C-terminal domain. Cysteine 550 is subject to Cysteine methyl ester. Cysteine 550 carries S-geranylgeranyl cysteine lipidation. Positions leucine 551–leucine 553 are cleaved as a propeptide — removed in mature form.

It belongs to the protein kinase superfamily. AGC Ser/Thr protein kinase family. GPRK subfamily. As to quaternary structure, interacts (when prenylated) with PDE6D; this promotes release from membranes. In terms of processing, autophosphorylated in vitro at Ser-490. Phosphorylation at Ser-36 is regulated by light and activated by cAMP.

The protein localises to the membrane. The enzyme catalyses L-threonyl-[rhodopsin] + ATP = O-phospho-L-threonyl-[rhodopsin] + ADP + H(+). It carries out the reaction L-seryl-[rhodopsin] + ATP = O-phospho-L-seryl-[rhodopsin] + ADP + H(+). Inhibited by phosphorylation of Ser-36. In terms of biological role, retina-specific kinase involved in the shutoff of the photoresponse and adaptation to changing light conditions via cone opsin phosphorylation, including rhodopsin (RHO). This Sus scrofa (Pig) protein is Rhodopsin kinase GRK7 (GRK7).